Reading from the N-terminus, the 514-residue chain is Na(+)/H(+) antiporter NhaB (514 aa).

12 helical membrane passes run 23 to 43, 63 to 83, 97 to 117, 120 to 140, 144 to 164, 202 to 222, 238 to 258, 303 to 323, 357 to 377, 391 to 411, 447 to 467, and 475 to 495; these read LALLVFLIINPFIFLANPFIA, PLLPGGLLAIEAVIIGMTSAA, LLLMFMVAGIYFMKQLLLFIF, LLLSIRSKMVLSLAFCVAAAF, FLDALTVVAVVISVAVGFYGI, LMMHAGVGTALGGVMTMVGEP, FFLRMSPVTVPVLVCGLLTCM, AVIGVWLVTALALHLAEVGLI, LTVFFSIVAVIIDQHLFAPII, LFYLFNGLLSSISDNVFVGTI, ATPNGQAAFLFLLTSALAPLI, and VWMALPYTIVLTLIGLLCVEF.

Belongs to the NhaB Na(+)/H(+) (TC 2.A.34) antiporter family.

The protein resides in the cell inner membrane. The catalysed reaction is 2 Na(+)(in) + 3 H(+)(out) = 2 Na(+)(out) + 3 H(+)(in). In terms of biological role, na(+)/H(+) antiporter that extrudes sodium in exchange for external protons. This is Na(+)/H(+) antiporter NhaB from Salmonella newport (strain SL254).